The sequence spans 355 residues: DnaJ homolog dnj-20 (355 aa).

Positions 1–21 (MRILNVSLLVLASSLVAFVEC) are cleaved as a signal peptide. A J domain is found at 24–89 (DFYKILGVAK…EKRAMYDRHG (66 aa)).

This Caenorhabditis elegans protein is DnaJ homolog dnj-20.